The primary structure comprises 404 residues: Multidrug resistance protein MdtG (404 aa).

11 consecutive transmembrane segments (helical) span residues 19-39 (LGCFLTGAAFSLVMPFLPLYV), 56-76 (LVFSITFLFSAIASPFWGGLA), 90-110 (LGMAIVMLLMGMAQNIWQFLI), 113-133 (ALLGLLGGFIPNANALIATQV), 149-169 (GVSGALLGPLAGGLLAGHYGL), 171-191 (PVFFITASVLFICFLLTFFFI), 222-242 (LFVTTLIIQVATGSIAPILTL), 254-274 (IAFISGMIASVPGVAALLSAP), 288-308 (ILIVALIISVLLLIPMSFVQT), 317-337 (FLLGAADGALLPAVQTLLVYN), and 376-396 (AVFCVTAGVVLFNAIYSWNSL).

This sequence belongs to the major facilitator superfamily. DHA1 family. MdtG (TC 2.A.1.2.20) subfamily.

The protein resides in the cell inner membrane. The polypeptide is Multidrug resistance protein MdtG (Salmonella paratyphi C (strain RKS4594)).